A 482-amino-acid polypeptide reads, in one-letter code: uncharacterized protein (482 aa).

2 WD repeats span residues Asp-92 to Ile-133 and Gly-191 to Lys-230.

The protein localises to the cytoplasm. The protein resides in the nucleus. This is an uncharacterized protein from Schizosaccharomyces pombe (strain 972 / ATCC 24843) (Fission yeast).